Consider the following 94-residue polypeptide: Pyrimidine/purine nucleoside phosphorylase (94 aa).

It belongs to the nucleoside phosphorylase PpnP family.

It catalyses the reaction a purine D-ribonucleoside + phosphate = a purine nucleobase + alpha-D-ribose 1-phosphate. It carries out the reaction adenosine + phosphate = alpha-D-ribose 1-phosphate + adenine. The enzyme catalyses cytidine + phosphate = cytosine + alpha-D-ribose 1-phosphate. The catalysed reaction is guanosine + phosphate = alpha-D-ribose 1-phosphate + guanine. It catalyses the reaction inosine + phosphate = alpha-D-ribose 1-phosphate + hypoxanthine. It carries out the reaction thymidine + phosphate = 2-deoxy-alpha-D-ribose 1-phosphate + thymine. The enzyme catalyses uridine + phosphate = alpha-D-ribose 1-phosphate + uracil. The catalysed reaction is xanthosine + phosphate = alpha-D-ribose 1-phosphate + xanthine. Its function is as follows. Catalyzes the phosphorolysis of diverse nucleosides, yielding D-ribose 1-phosphate and the respective free bases. Can use uridine, adenosine, guanosine, cytidine, thymidine, inosine and xanthosine as substrates. Also catalyzes the reverse reactions. In Pseudomonas fluorescens (strain ATCC BAA-477 / NRRL B-23932 / Pf-5), this protein is Pyrimidine/purine nucleoside phosphorylase.